A 387-amino-acid chain; its full sequence is Putative glutamate--cysteine ligase 2 (387 aa).

This sequence belongs to the glutamate--cysteine ligase type 2 family. YbdK subfamily.

It carries out the reaction L-cysteine + L-glutamate + ATP = gamma-L-glutamyl-L-cysteine + ADP + phosphate + H(+). ATP-dependent carboxylate-amine ligase which exhibits weak glutamate--cysteine ligase activity. This is Putative glutamate--cysteine ligase 2 from Trichormus variabilis (strain ATCC 29413 / PCC 7937) (Anabaena variabilis).